Consider the following 280-residue polypeptide: Succinate dehydrogenase [ubiquinone] iron-sulfur subunit, mitochondrial (280 aa).

A mitochondrion-targeting transit peptide spans 1-25 (MAAVCFSLSRCCSAVHRPAVTAVRF). One can recognise a 2Fe-2S ferredoxin-type domain in the interval 39-129 (KKFQIYRWDP…TSKVTKIYPL (91 aa)). 4 residues coordinate [2Fe-2S] cluster: Cys-92, Cys-97, Cys-100, and Cys-112. Positions 175 to 205 (DRQKLDGLYECILCACCSTSCPSYWWNADKY) constitute a 4Fe-4S ferredoxin-type domain. The [4Fe-4S] cluster site is built by Cys-185, Cys-188, and Cys-191. Residue Cys-195 participates in [3Fe-4S] cluster binding. Position 200 (Trp-200) interacts with a ubiquinone. Cys-242 and Cys-248 together coordinate [3Fe-4S] cluster. Cys-252 is a binding site for [4Fe-4S] cluster.

It belongs to the succinate dehydrogenase/fumarate reductase iron-sulfur protein family. Component of complex II composed of four subunits: the flavoprotein (FP) sdha, iron-sulfur protein (IP) sdhb, and a cytochrome b composed of sdhc and sdhd. It depends on [2Fe-2S] cluster as a cofactor. The cofactor is [3Fe-4S] cluster. Requires [4Fe-4S] cluster as cofactor.

It is found in the mitochondrion inner membrane. The catalysed reaction is a quinone + succinate = fumarate + a quinol. It carries out the reaction (R)-malate + a quinone = enol-oxaloacetate + a quinol. It catalyses the reaction (S)-malate + a quinone = enol-oxaloacetate + a quinol. The protein operates within carbohydrate metabolism; tricarboxylic acid cycle; fumarate from succinate (eukaryal route): step 1/1. With respect to regulation, enol-oxaloacetate inhibits the succinate dehydrogenase activity. Functionally, iron-sulfur protein (IP) subunit of the succinate dehydrogenase complex (mitochondrial respiratory chain complex II), responsible for transferring electrons from succinate to ubiquinone (coenzyme Q). SDH also oxidizes malate to the non-canonical enol form of oxaloacetate, enol-oxaloacetate. Enol-oxaloacetate, which is a potent inhibitor of the succinate dehydrogenase activity, is further isomerized into keto-oxaloacetate. This is Succinate dehydrogenase [ubiquinone] iron-sulfur subunit, mitochondrial (sdhb) from Danio rerio (Zebrafish).